Here is a 329-residue protein sequence, read N- to C-terminus: Glycerol-3-phosphate dehydrogenase [NAD(P)+] (329 aa).

Residues Ser-10, Trp-11, Arg-31, and Lys-105 each coordinate NADPH. Sn-glycerol 3-phosphate is bound by residues Lys-105, Gly-134, and Ser-136. Residue Ala-138 coordinates NADPH. Residues Lys-189, Asp-242, Ser-252, Arg-253, and Asn-254 each contribute to the sn-glycerol 3-phosphate site. Lys-189 functions as the Proton acceptor in the catalytic mechanism. Arg-253 is a binding site for NADPH. NADPH is bound by residues Val-277 and Glu-279.

The protein belongs to the NAD-dependent glycerol-3-phosphate dehydrogenase family.

It localises to the cytoplasm. It carries out the reaction sn-glycerol 3-phosphate + NAD(+) = dihydroxyacetone phosphate + NADH + H(+). It catalyses the reaction sn-glycerol 3-phosphate + NADP(+) = dihydroxyacetone phosphate + NADPH + H(+). The protein operates within membrane lipid metabolism; glycerophospholipid metabolism. Its function is as follows. Catalyzes the reduction of the glycolytic intermediate dihydroxyacetone phosphate (DHAP) to sn-glycerol 3-phosphate (G3P), the key precursor for phospholipid synthesis. In Neisseria gonorrhoeae (strain ATCC 700825 / FA 1090), this protein is Glycerol-3-phosphate dehydrogenase [NAD(P)+].